The primary structure comprises 94 residues: uncharacterized protein (94 aa).

This is an uncharacterized protein from Treponema pallidum (strain Nichols).